Consider the following 1127-residue polypeptide: Zinc finger protein basonuclin-2 (1127 aa).

Residues 44-67 (SEEAEVDVRERDTQRDREPKRARD) are disordered. Positions 49–67 (VDVRERDTQRDREPKRARD) are enriched in basic and acidic residues. Residue Lys-305 forms a Glycyl lysine isopeptide (Lys-Gly) (interchain with G-Cter in SUMO2) linkage. The interval 386-450 (STQNEYNESS…DLSKTEHPKS (65 aa)) is disordered. Over residues 389–400 (NEYNESSESEVS) the composition is skewed to low complexity. Residues 403-422 (PYKSDQTPNRNALTSITNVE) show a composition bias toward polar residues. Glycyl lysine isopeptide (Lys-Gly) (interchain with G-Cter in SUMO2) cross-links involve residues Lys-424, Lys-444, and Lys-449. The C2H2-type 1 zinc-finger motif lies at 469-492 (VFCNACGKTFYDKGTLKIHYNAVH). At Ser-589 the chain carries Phosphoserine. Lys-669 participates in a covalent cross-link: Glycyl lysine isopeptide (Lys-Gly) (interchain with G-Cter in SUMO2). A disordered region spans residues 675–772 (IDTADEFDDE…EESMEGDEHL (98 aa)). Residues 676–689 (DTADEFDDEDDDPN) show a composition bias toward acidic residues. Composition is skewed to basic and acidic residues over residues 698–708 (MSHDNHCHSQD) and 747–772 (ERDYENESESSEPKLGEESMEGDEHL). A C2H2-type 2 zinc finger spans residues 861-884 (KICYVCKKSFKSSYSVKLHYRNVH). Glycyl lysine isopeptide (Lys-Gly) (interchain with G-Cter in SUMO2) cross-links involve residues Lys-922 and Lys-947. 2 disordered regions span residues 955-976 (LGLDGREDASSPAGTEDSHLNG) and 996-1041 (LQSS…TLPG). Positions 1010 to 1023 (AGSDEGILLDDIDG) are enriched in acidic residues. 2 consecutive C2H2-type zinc fingers follow at residues 1063 to 1086 (IMCNICHKMYSNKGTLRVHYKTVH) and 1091 to 1118 (HKCKVPGCNMMFSSVRSRNRHSQNPNLH). A disordered region spans residues 1107–1127 (SRNRHSQNPNLHKNIPFTSID).

As to expression, highly expressed in ovary, testis and kidney. Expressed at moderate levels in skin and small intestine, and at lower levels in lung. Trace amounts of expression detected in liver and colon. Not detected in brain, spleen or thymus.

Its subcellular location is the nucleus. Functionally, probable transcription factor specific for skin keratinocytes. May play a role in the differentiation of spermatozoa and oocytes. May also play an important role in early urinary-tract development. The polypeptide is Zinc finger protein basonuclin-2 (Mus musculus (Mouse)).